The sequence spans 1589 residues: Mediator of RNA polymerase II transcription subunit 23 (1589 aa).

The segment at 1381–1499 is disordered; that stretch reads YVSQNEPAPP…PPTPAPMHHQ (119 aa). Over residues 1392-1410 the composition is skewed to basic and acidic residues; the sequence is TPEREKTPERKDQQKEQQE. The span at 1457–1470 shows a compositional bias: low complexity; it reads LHHQQQQQQHLSQM.

The protein belongs to the Mediator complex subunit 23 family. In terms of assembly, component of the Mediator complex.

The protein resides in the nucleus. In terms of biological role, component of the Mediator complex, a coactivator involved in the regulated transcription of nearly all RNA polymerase II-dependent genes. Mediator functions as a bridge to convey information from gene-specific regulatory proteins to the basal RNA polymerase II transcription machinery. Mediator is recruited to promoters by direct interactions with regulatory proteins and serves as a scaffold for the assembly of a functional preinitiation complex with RNA polymerase II and the general transcription factors. The polypeptide is Mediator of RNA polymerase II transcription subunit 23 (sur-2) (Caenorhabditis briggsae).